Here is a 345-residue protein sequence, read N- to C-terminus: Delta(6)-protoilludene synthase (345 aa).

Positions 84, 220, 224, and 228 each coordinate Mg(2+). A DDXXD motif motif is present at residues 84-88 (DEYSD). The (2E,6E)-farnesyl diphosphate site is built by Arg-309 and Tyr-310.

The protein belongs to the terpene synthase family. As to quaternary structure, monomer. Mg(2+) is required as a cofactor.

The enzyme catalyses (2E,6E)-farnesyl diphosphate = Delta(6)-protoilludene + diphosphate. It participates in secondary metabolite biosynthesis. Delta(6)-protoilludene synthase, part of the gene cluster that mediates the biosynthesis of melleolides, a range of antifungal and phytotoxic polyketide derivatives composed of an orsellinic acid (OA) moiety esterified to various sesquiterpene alcohols. The first step in melleolides biosynthesis is performed by the delta(6)-protoilludene synthase PRO1 which catalyzes the cyclization of farnesyl diphosphate to protoilludene. The orsellinic acid synthase armB produces OA by condensing acetyl-CoA with 3 malonyl-CoA units in a three-round chain elongation reaction folowed by a C2-C7 ring closure. ArmB further catalyzes the trans-esterification of OA to the various sesquiterpene alcohols resulting from the hydroxylation of protoilludene. The melleolides cluster also includes 5 cytochrome P450 monooxygenases, 4 NAD(+)-dependent oxidoreductases, one flavin-dependent oxidoreductase, and one O-methyltransferase. The cytochrome P450 monooxygenases may be involved in protoilludene hydroxylation to elaborate melleolides with multiple alcohol groups, such as melleolide D, which carries alcohol functionalities at C-4, C-5, C-10, and C-13. The role of the NAD(+)-dependent enzymes remains unknown. Numerous melleolides, including arnamial, show 5'-O-methylation of the aromatic moiety which may be catalyzed by the methyltransferase encoded in the cluster. The flavin-dependent oxidoreductase might represent the dehydrogenase yielding the aldehyde in position 1 of arnamial and other melleolides. Finally, several halogenases, localized outside of the cluster, are able to catalyze the transfer of a single chlorine atom to the melleolide backbone, resulting in a 6'-chloromelleolide product. The polypeptide is Delta(6)-protoilludene synthase (Armillaria gallica (Bulbous honey fungus)).